The sequence spans 153 residues: UPF0756 membrane protein Pjdr2_2290 (153 aa).

The next 5 membrane-spanning stretches (helical) occupy residues 6-26, 50-70, 75-95, 111-131, and 132-152; these read LILV…IATA, LELG…SGKV, LIAA…AVAA, MVVG…GIPV, and GPLM…LMSG.

This sequence belongs to the UPF0756 family.

It is found in the cell membrane. In Paenibacillus sp. (strain JDR-2), this protein is UPF0756 membrane protein Pjdr2_2290.